The chain runs to 204 residues: Guanylate kinase (204 aa).

The Guanylate kinase-like domain occupies glycine 5 to alanine 184. Glycine 12–glycine 19 lines the ATP pocket.

It belongs to the guanylate kinase family.

It localises to the cytoplasm. The enzyme catalyses GMP + ATP = GDP + ADP. Essential for recycling GMP and indirectly, cGMP. The protein is Guanylate kinase of Enterococcus faecalis (strain ATCC 700802 / V583).